Consider the following 2090-residue polypeptide: Dysferlin (2090 aa).

A C2 1 domain is found at 1 to 101; the sequence is MLRVFILFAE…LATPSLSASF (101 aa). The Cytoplasmic portion of the chain corresponds to 1–2056; the sequence is MLRVFILFAE…FILWRRFRCA (2056 aa). Ca(2+)-binding residues include Asp18, Ile19, Asp21, and Asn40. The disordered stretch occupies residues 130-217; that stretch reads VPLFPPPASL…SAPPRKLLSD (88 aa). A compositionally biased stretch (acidic residues) spans 155 to 172; it reads GGEEDTEDQGLTGDEAEP. Residue Gly164 is modified to Phosphoserine. Thr166 carries the post-translational modification Phosphothreonine. Gly167 bears the Phosphoserine mark. Pro residues predominate over residues 188–199; that stretch reads PRKPPSHPPPHY. C2 domains are found at residues 206–323, 362–498, 1146–1272, 1320–1448, 1571–1689, and 1805–1953; these read RSSA…RKWL, DKED…EEEP, GVNR…PLTR, PPPQ…AESP, PMPP…ARCG, and GRPG…EKCS. Phosphoserine is present on Ala209. Position 219 is a phosphothreonine (Pro219). Ca(2+) is bound by residues Asp411, Asp419, Asp467, Asp469, Asp475, Asp1178, Asp1184, Asp1240, and Asp1242. Ca(2+)-binding residues include Asp1604, Asp1610, Asp1659, Asp1661, Asp1924, Ser1927, and Asp1930. The tract at residues 2005 to 2027 is disordered; sequence SEHEERPAGQGRDEPNMNPKLED. A helical membrane pass occupies residues 2057–2077; the sequence is IILFIILFILLLFLGVFVYAF. Residues 2078–2090 lie on the Extracellular side of the membrane; sequence PNYAAMKLVKPFR.

It belongs to the ferlin family. In terms of assembly, interacts with CAV3. Interacts with AHNAK; the interaction is direct and Ca(2+)-independent. Interacts with AHNAK2; the interaction is direct and Ca(2+)-independent. Interacts with ANXA1; the interaction is Ca(2+)- and injury state-dependent. Interacts with ANXA2; the interaction is Ca(2+)- and injury state-dependent. Interacts with CACNA1S and PARVB. Interacts with TRIM72/MG53; interaction is required for transport to sites of cell injury during repair patch formation. Interacts with RIPOR2; this interaction occurs during early myogenic differentiation. The cofactor is Ca(2+). Expressed in skeletal and cardiac muscles (at protein level). Expressed in skeletal muscle and heart. Also found in brain, liver and kidney.

The protein resides in the cell membrane. Its subcellular location is the sarcolemma. It is found in the cytoplasmic vesicle membrane. Key calcium ion sensor involved in the Ca(2+)-triggered synaptic vesicle-plasma membrane fusion. Plays a role in the sarcolemma repair mechanism of both skeletal muscle and cardiomyocytes that permits rapid resealing of membranes disrupted by mechanical stress. The sequence is that of Dysferlin (Dysf) from Mus musculus (Mouse).